The chain runs to 389 residues: Lipid-A-disaccharide synthase (389 aa).

The protein belongs to the LpxB family.

The enzyme catalyses a lipid X + a UDP-2-N,3-O-bis[(3R)-3-hydroxyacyl]-alpha-D-glucosamine = a lipid A disaccharide + UDP + H(+). It participates in bacterial outer membrane biogenesis; LPS lipid A biosynthesis. Its function is as follows. Condensation of UDP-2,3-diacylglucosamine and 2,3-diacylglucosamine-1-phosphate to form lipid A disaccharide, a precursor of lipid A, a phosphorylated glycolipid that anchors the lipopolysaccharide to the outer membrane of the cell. The sequence is that of Lipid-A-disaccharide synthase from Burkholderia cenocepacia (strain ATCC BAA-245 / DSM 16553 / LMG 16656 / NCTC 13227 / J2315 / CF5610) (Burkholderia cepacia (strain J2315)).